Consider the following 860-residue polypeptide: DNA mismatch repair protein MutS (860 aa).

Residue glycine 607–serine 614 coordinates ATP.

Belongs to the DNA mismatch repair MutS family.

Functionally, this protein is involved in the repair of mismatches in DNA. It is possible that it carries out the mismatch recognition step. This protein has a weak ATPase activity. In Listeria innocua serovar 6a (strain ATCC BAA-680 / CLIP 11262), this protein is DNA mismatch repair protein MutS.